A 427-amino-acid chain; its full sequence is Arginine biosynthesis bifunctional protein ArgJ (427 aa).

6 residues coordinate substrate: T174, K200, T211, E291, N422, and T427. Residue T211 is the Nucleophile of the active site.

The protein belongs to the ArgJ family. Heterotetramer of two alpha and two beta chains.

It localises to the cytoplasm. The enzyme catalyses N(2)-acetyl-L-ornithine + L-glutamate = N-acetyl-L-glutamate + L-ornithine. The catalysed reaction is L-glutamate + acetyl-CoA = N-acetyl-L-glutamate + CoA + H(+). Its pathway is amino-acid biosynthesis; L-arginine biosynthesis; L-ornithine and N-acetyl-L-glutamate from L-glutamate and N(2)-acetyl-L-ornithine (cyclic): step 1/1. It functions in the pathway amino-acid biosynthesis; L-arginine biosynthesis; N(2)-acetyl-L-ornithine from L-glutamate: step 1/4. In terms of biological role, catalyzes two activities which are involved in the cyclic version of arginine biosynthesis: the synthesis of N-acetylglutamate from glutamate and acetyl-CoA as the acetyl donor, and of ornithine by transacetylation between N(2)-acetylornithine and glutamate. The chain is Arginine biosynthesis bifunctional protein ArgJ from Prochlorococcus marinus (strain MIT 9313).